A 363-amino-acid chain; its full sequence is Fructose-bisphosphate aldolase 1 (363 aa).

Position 34 (Asp-34) interacts with dihydroxyacetone phosphate. D-glyceraldehyde 3-phosphate is bound by residues Ser-36 and Thr-39. Arg-43 provides a ligand contact to beta-D-fructose 1,6-bisphosphate. Lys-107 contacts D-glyceraldehyde 3-phosphate. Lys-146 is a binding site for dihydroxyacetone phosphate. D-glyceraldehyde 3-phosphate is bound at residue Glu-189. Residue Glu-189 is the Proton acceptor of the active site. Positions 231, 273, and 274 each coordinate dihydroxyacetone phosphate. Lys-231 (schiff-base intermediate with dihydroxyacetone phosphate) is an active-site residue. Beta-D-fructose 1,6-bisphosphate is bound by residues 273–275 and Ser-301; that span reads SGG. Residues Gly-303 and Arg-304 each coordinate dihydroxyacetone phosphate. Arg-304 is a beta-D-fructose 1,6-bisphosphate binding site.

Belongs to the class I fructose-bisphosphate aldolase family. In terms of assembly, homotetramer. Component of a complex, at least composed of ald-1, microneme protein MIC2 and ACT1. Interacts with microneme protein MIC2 (via cytoplasmic tail). Interacts with ACT1 (F-actin).

It localises to the cytoplasm. It catalyses the reaction beta-D-fructose 1,6-bisphosphate = D-glyceraldehyde 3-phosphate + dihydroxyacetone phosphate. Its pathway is carbohydrate degradation; glycolysis; D-glyceraldehyde 3-phosphate and glycerone phosphate from D-glucose: step 4/4. Functionally, plays a key role in glycolysis by catalyzing the cleavage of fructose 1,6-bisphosphate into dihydroxyacetone phosphate and glyceraldehyde 3-phosphate. Forms a bridge between cell surface adhesins and the actin cytoskeleton. Required for parasite invasion of host cells. The protein is Fructose-bisphosphate aldolase 1 of Toxoplasma gondii.